The following is a 646-amino-acid chain: Serine/threonine-protein kinase max-2 (646 aa).

The interval 19 to 40 is disordered; sequence FSPSDKDKDRDDEMKPSSSAMD. A compositionally biased stretch (basic and acidic residues) spans 22–33; that stretch reads SDKDKDRDDEMK. In terms of domain architecture, CRIB spans 41–54; it reads ISQPYNTVHRVHVG. A disordered region spans residues 136 to 345; it reads LQCSNGSATS…PPPPEEPPVR (210 aa). Composition is skewed to low complexity over residues 142-157 and 167-180; these read SATSPSTSVSASSSSA and LSTASSTDTSLSLS. A compositionally biased stretch (polar residues) spans 196–205; the sequence is SAPQLKTFTG. Pro residues predominate over residues 214 to 223; the sequence is SPFPPQPPVL. Residues 229 to 245 are compositionally biased toward low complexity; it reads TASAVATTTTNPTTSNG. Over residues 246 to 262 the composition is skewed to pro residues; that stretch reads APPPVPGSKGPPVPPKP. Composition is skewed to low complexity over residues 273–307 and 323–334; these read SSGCSSPQQYSSARSVGNSLSNGSVVSTTSSDGDV and KNGNTTTNKTTV. Residues 376-627 enclose the Protein kinase domain; it reads YEMKKQIGVG…TTELLAHPFL (252 aa). ATP-binding positions include 382 to 390 and lysine 405; that span reads IGVGASGTV. The active-site Proton acceptor is the aspartate 496.

It belongs to the protein kinase superfamily. STE Ser/Thr protein kinase family. STE20 subfamily. In terms of assembly, interacts with mlk-1; the interaction is independent of max-2 and mlk-1 kinase activities. Interacts with mig-2 (GTP-bound form). It depends on Mg(2+) as a cofactor.

It is found in the perikaryon. The protein localises to the cell projection. It localises to the dendrite. The protein resides in the cytoplasm. It catalyses the reaction L-seryl-[protein] + ATP = O-phospho-L-seryl-[protein] + ADP + H(+). The enzyme catalyses L-threonyl-[protein] + ATP = O-phospho-L-threonyl-[protein] + ADP + H(+). In terms of biological role, serine/threonine-protein kinase, which phosphorylates mlk-1. Involved in the stress response to heavy metals by activating the mlk-1/mek-1/kgb-1 pathway. In ventral cord commissural motoneurons, required for dorsal axon guidance downstream of unc-6/netrin repulsion receptor unc-5 and probably of Rho GTPases ced-10 and mig-2. Plays a redundant role with mig-10 in orientating axonal growth of HSN neurons. Plays a redundant role with pak-1 in P neuroblast migration and in distal tip cell (DTC)-mediated guidance of gonad elongation probably downstream of Rho GTPases. In association with pak-2, plays a role in embryogenesis. In association with pak-1, may be involved in spermatogenesis. This chain is Serine/threonine-protein kinase max-2, found in Caenorhabditis elegans.